The sequence spans 760 residues: Catalase-peroxidase (760 aa).

The disordered stretch occupies residues methionine 1–leucine 57. Residues tryptophan 129–tyrosine 251 constitute a cross-link (tryptophyl-tyrosyl-methioninium (Trp-Tyr) (with M-277)). Residue histidine 130 is the Proton acceptor of the active site. Residues tyrosine 251–methionine 277 constitute a cross-link (tryptophyl-tyrosyl-methioninium (Tyr-Met) (with W-129)). Histidine 292 provides a ligand contact to heme b.

It belongs to the peroxidase family. Peroxidase/catalase subfamily. In terms of assembly, homodimer or homotetramer. The cofactor is heme b. In terms of processing, formation of the three residue Trp-Tyr-Met cross-link is important for the catalase, but not the peroxidase activity of the enzyme.

It catalyses the reaction H2O2 + AH2 = A + 2 H2O. The catalysed reaction is 2 H2O2 = O2 + 2 H2O. Functionally, bifunctional enzyme with both catalase and broad-spectrum peroxidase activity. This Nocardioides sp. (strain ATCC BAA-499 / JS614) protein is Catalase-peroxidase.